A 60-amino-acid polypeptide reads, in one-letter code: Large ribosomal subunit protein uL30 (60 aa).

It belongs to the universal ribosomal protein uL30 family. As to quaternary structure, part of the 50S ribosomal subunit.

The chain is Large ribosomal subunit protein uL30 from Finegoldia magna (strain ATCC 29328 / DSM 20472 / WAL 2508) (Peptostreptococcus magnus).